Consider the following 338-residue polypeptide: Lipoate-protein ligase A (338 aa).

A BPL/LPL catalytic domain is found at 29 to 216 (PATQRVLFLW…AFFAHYGERV (188 aa)). ATP is bound by residues Arg71, 76–79 (GAVF), and Lys134. Lys134 serves as a coordination point for (R)-lipoate.

Belongs to the LplA family. In terms of assembly, monomer.

It localises to the cytoplasm. The enzyme catalyses L-lysyl-[lipoyl-carrier protein] + (R)-lipoate + ATP = N(6)-[(R)-lipoyl]-L-lysyl-[lipoyl-carrier protein] + AMP + diphosphate + H(+). It functions in the pathway protein modification; protein lipoylation via exogenous pathway; protein N(6)-(lipoyl)lysine from lipoate: step 1/2. The protein operates within protein modification; protein lipoylation via exogenous pathway; protein N(6)-(lipoyl)lysine from lipoate: step 2/2. Catalyzes both the ATP-dependent activation of exogenously supplied lipoate to lipoyl-AMP and the transfer of the activated lipoyl onto the lipoyl domains of lipoate-dependent enzymes. In Shigella sonnei (strain Ss046), this protein is Lipoate-protein ligase A.